The chain runs to 117 residues: Small ribosomal subunit protein bS6 (117 aa).

This sequence belongs to the bacterial ribosomal protein bS6 family.

Its function is as follows. Binds together with bS18 to 16S ribosomal RNA. This chain is Small ribosomal subunit protein bS6, found in Trichodesmium erythraeum (strain IMS101).